The primary structure comprises 403 residues: JmjC domain-containing histone demethylation protein 1 (403 aa).

Positions 141 to 328 (WSLREWCNYF…QQLKIVDVEK (188 aa)) constitute a JmjC domain. A substrate-binding site is contributed by T221. Fe cation is bound by residues H224 and D226. K241 is a substrate binding site. H296 is a binding site for Fe cation.

It belongs to the JHDM1 histone demethylase family. The cofactor is Fe(2+).

It is found in the nucleus. The enzyme catalyses N(6),N(6)-dimethyl-L-lysyl(36)-[histone H3] + 2 2-oxoglutarate + 2 O2 = L-lysyl(36)-[histone H3] + 2 formaldehyde + 2 succinate + 2 CO2. Its function is as follows. Histone demethylase that specifically demethylates 'Lys-36' of histone H3, thereby playing a central role in histone code. The chain is JmjC domain-containing histone demethylation protein 1 (JHD1) from Candida glabrata (strain ATCC 2001 / BCRC 20586 / JCM 3761 / NBRC 0622 / NRRL Y-65 / CBS 138) (Yeast).